We begin with the raw amino-acid sequence, 89 residues long: MADDAIPHTDVLNSTAQGQLKSIIERVERLEVEKAEIMEQIKEVYAEAKGNGFDVKVLKKVVRIRKQDRAKRQEEDAILDLYLSAIGEI.

This sequence belongs to the UPF0335 family.

In Caulobacter vibrioides (strain NA1000 / CB15N) (Caulobacter crescentus), this protein is UPF0335 protein CCNA_03428.